A 488-amino-acid polypeptide reads, in one-letter code: Glutamate--tRNA ligase (488 aa).

The 'HIGH' region signature appears at 16–26 (PSPTGEPHVGT). Positions 257–261 (KLSKR) match the 'KMSKS' region motif. K260 lines the ATP pocket.

Belongs to the class-I aminoacyl-tRNA synthetase family. Glutamate--tRNA ligase type 1 subfamily. As to quaternary structure, monomer.

The protein localises to the cytoplasm. It catalyses the reaction tRNA(Glu) + L-glutamate + ATP = L-glutamyl-tRNA(Glu) + AMP + diphosphate. Functionally, catalyzes the attachment of glutamate to tRNA(Glu) in a two-step reaction: glutamate is first activated by ATP to form Glu-AMP and then transferred to the acceptor end of tRNA(Glu). The protein is Glutamate--tRNA ligase of Rhizobium johnstonii (strain DSM 114642 / LMG 32736 / 3841) (Rhizobium leguminosarum bv. viciae).